A 141-amino-acid chain; its full sequence is Small ribosomal subunit protein bS6 (141 aa).

The disordered stretch occupies residues 96 to 141 (VTGPSEMLKAEENRSERRERRERPEHADGAEGDDSNDSDNSDNADE). The segment covering 103–124 (LKAEENRSERRERRERPEHADG) has biased composition (basic and acidic residues). A compositionally biased stretch (acidic residues) spans 125–141 (AEGDDSNDSDNSDNADE).

This sequence belongs to the bacterial ribosomal protein bS6 family.

Functionally, binds together with bS18 to 16S ribosomal RNA. The protein is Small ribosomal subunit protein bS6 of Pseudomonas entomophila (strain L48).